A 787-amino-acid polypeptide reads, in one-letter code: Phenylalanine--tRNA ligase beta subunit (787 aa).

One can recognise a tRNA-binding domain in the interval 38–151 (GQDPAPFVVA…SDYEVGDSFF (114 aa)). A B5 domain is found at 397 to 474 (SEGRVISFNP…RMHGYDKVQE (78 aa)). D452, D458, E461, and E462 together coordinate Mg(2+). In terms of domain architecture, FDX-ACB spans 694–785 (HKYQPVKRDF…VAQKLGGELR (92 aa)).

Belongs to the phenylalanyl-tRNA synthetase beta subunit family. Type 1 subfamily. As to quaternary structure, tetramer of two alpha and two beta subunits. Mg(2+) is required as a cofactor.

The protein localises to the cytoplasm. The catalysed reaction is tRNA(Phe) + L-phenylalanine + ATP = L-phenylalanyl-tRNA(Phe) + AMP + diphosphate + H(+). The chain is Phenylalanine--tRNA ligase beta subunit from Anaplasma marginale (strain St. Maries).